Consider the following 325-residue polypeptide: Thiamine-monophosphate kinase (325 aa).

Mg(2+) contacts are provided by aspartate 30, serine 45, threonine 46, and aspartate 47. Residue histidine 54 coordinates substrate. Positions 75 and 122 each coordinate Mg(2+). Residues 121 to 122 (GD) and arginine 146 each bind ATP. Aspartate 212 contacts Mg(2+). Serine 214 contacts ATP. Aspartate 215 provides a ligand contact to Mg(2+). Substrate is bound by residues glutamate 263 and tyrosine 319.

Belongs to the thiamine-monophosphate kinase family.

It catalyses the reaction thiamine phosphate + ATP = thiamine diphosphate + ADP. Its pathway is cofactor biosynthesis; thiamine diphosphate biosynthesis; thiamine diphosphate from thiamine phosphate: step 1/1. Functionally, catalyzes the ATP-dependent phosphorylation of thiamine-monophosphate (TMP) to form thiamine-pyrophosphate (TPP), the active form of vitamin B1. The chain is Thiamine-monophosphate kinase (thiL) from Salmonella typhimurium (strain LT2 / SGSC1412 / ATCC 700720).